The primary structure comprises 1146 residues: Inositol hexakisphosphate and diphosphoinositol-pentakisphosphate kinase (1146 aa).

Positions 1–33 are disordered; it reads MSGIKKEPIESDEVPQQETKNNLPSAPSEMSPL. Residues 16 to 25 show a composition bias toward polar residues; the sequence is QQETKNNLPS. Phosphoserine occurs at positions 31, 54, and 77. Positions 93 to 185 are disordered; the sequence is TALGNGNNTN…STSHPKPRLP (93 aa). Residues 96 to 106 are compositionally biased toward low complexity; the sequence is GNGNNTNTVTT. The span at 110–120 shows a compositional bias: basic and acidic residues; the sequence is KKADSESKSEA. The segment covering 125–144 has biased composition (polar residues); the sequence is LSNSNIVNDADNINSISKTG. Residues 164-178 are compositionally biased toward low complexity; it reads SVPTSSASSRKSSTS. Residue 197–198 participates in substrate binding; it reads AK. ATP is bound by residues R278, K351, H358, R377, 402–405, and 412–414; these read EQFM and DVK. 377–378 contributes to the substrate binding site; that stretch reads RK. 2 residues coordinate substrate: K414 and R428. ATP is bound by residues S430, D475, and 487-489; that span reads DVN. Substrate is bound at residue 492–495; the sequence is SFVK. The segment at 530–597 is polyphosphoinositide-binding domain; sequence REEKEQKWVF…VLQALRIALD (68 aa). A phosphoserine mark is found at S895 and S1107. Positions 1106 to 1146 are disordered; that stretch reads TSPNLSFQKRKTRRKSVSVEKLKRPASSGSSSSTSVNKTLD.

Belongs to the histidine acid phosphatase family. VIP1 subfamily.

Its subcellular location is the cytoplasm. It localises to the cytoskeleton. The catalysed reaction is 1D-myo-inositol hexakisphosphate + ATP = 1-diphospho-1D-myo-inositol 2,3,4,5,6-pentakisphosphate + ADP. The enzyme catalyses 5-diphospho-1D-myo-inositol 1,2,3,4,6-pentakisphosphate + ATP + H(+) = 1,5-bis(diphospho)-1D-myo-inositol 2,3,4,6-tetrakisphosphate + ADP. Its function is as follows. Bifunctional inositol kinase that acts in concert with the IP6K kinases to synthesize the diphosphate group-containing inositol pyrophosphates diphosphoinositol pentakisphosphate, PP-InsP5, and bis-diphosphoinositol tetrakisphosphate, (PP)2-InsP4. Phosphorylates inositol hexakisphosphate (InsP6) at position 1 to produce PP-InsP5 which is in turn phosphorylated by IP6Ks to produce (PP)2-InsP4. Alternatively, phosphorylates PP-InsP5 at position 1, produced by IP6Ks from InsP6, to produce (PP)2-InsP4. Required for maintaining cellular integrity, normal growth and interactions with the ARP complex. Acts as a regulator of the PHO80-PHO85 cyclin/cyclin-dependent kinase (CDK) complex, thereby regulating signaling of phosphate availability. Required for the function of the cortical actin cytoskeleton, possibly by participating in correct F-actin localization and ensuring polarized growth. Regulates polarized growth and modulates interphase microtubule cytoskeleton. Regulates microtubule dynamics without the requirement of microtubule plus-end tracking protein Mal3. Required for growth zone selection. In Saccharomyces cerevisiae (strain ATCC 204508 / S288c) (Baker's yeast), this protein is Inositol hexakisphosphate and diphosphoinositol-pentakisphosphate kinase.